The following is a 508-amino-acid chain: Bestrophin-2 (508 aa).

At 1–31 the chain is on the cytoplasmic side; that stretch reads MTVTYTARVANARFGGFSQLLLLWRGSIYKL. A Ca(2+)-binding site is contributed by Ala10. Residues 32-51 traverse the membrane as a helical segment; it reads LWRELLCFLGLYMALSAAYR. Residues 52–60 are Extracellular-facing; it reads FLLAEEQKR. The chain crosses the membrane as a helical span at residues 61–82; it reads YFEKLVIYCDQYASLIPVSFVL. The Cytoplasmic segment spans residues 83-238; sequence GFYVTLVVHR…WISIPLVYTQ (156 aa). The chain crosses the membrane as a helical span at residues 239–255; it reads VVTIAVYSYFLACLIGR. Topologically, residues 256–274 are extracellular; the sequence is QFLDPAQGYKDHTLDLCVP. Residues 275–288 traverse the membrane as a helical segment; it reads IFTLLQFFFYAGWL. Residues 289–508 lie on the Cytoplasmic side of the membrane; that stretch reads KVAEQLINPF…PIGEEEESPA (220 aa). Residues Gln293, Asn296, Asp301, and Asp304 each contribute to the Ca(2+) site. Positions 455–508 are disordered; that stretch reads LREPELEPPACPEPPAPIPGPTPEPFTTVSIPGPRAPAPPWLPSPIGEEEESPA. Composition is skewed to pro residues over residues 461–478 and 488–497; these read EPPA…PTPE and PRAPAPPWLP.

The protein belongs to the anion channel-forming bestrophin (TC 1.A.46) family. Calcium-sensitive chloride channel subfamily. As to quaternary structure, pentamer. Interacts with GLUL; this interaction tethers a fraction of GLUL to the membrane, causing a decrease of cytosolic glutamine synthase (GS) activity and inhibits the chloride channel activity of BEST2 by affecting the gating at the aperture in the absence of intracellular glutamate. In terms of tissue distribution, expressed in mucin-secreting colonic goblet cells.

It is found in the cell membrane. The protein resides in the basolateral cell membrane. The catalysed reaction is chloride(in) = chloride(out). The enzyme catalyses hydrogencarbonate(in) = hydrogencarbonate(out). It carries out the reaction L-glutamate(out) = L-glutamate(in). It catalyses the reaction iodide(out) = iodide(in). The catalysed reaction is L-glutamine(out) = L-glutamine(in). Chloride channel activity is allosterically inhibited by GLUL/glutamine synthase (GS) which affects the gating at the aperture in the absence of intracellular glutamate. Inhibitory effect of GLUL is relieved upon increasing of intracellular level of L-glutamate. Its function is as follows. Ligand-gated anion channel that allows the movement of anions across cell membranes when activated by calcium (Ca2+). Transports a large specter of anions, namely mediates the movement of chloride, L-glutamate and iodide. Calcium-binding triggers the dilation of the aperture, but calcium-dependent gating is only effective when the size of the passing anion is bigger than the closed aperture. Mediates the calcium-activated hydrogencarbonate movement and participates in colonic hydrogencarbonate secretion concomitant with mucin secretion. In non-pigmented epithelium (NPE), mediates the efflux of intracellular L-glutamate; binding of intracellular L-glutamate activates and open both the neck and the aperture of the channel, leading to L-glutamate exit promoting chloride influx movement from the extracellular side in trans. Also exhibits a directional permeability for intracellular glutamine, in a similar manner as for L-glutamate. The protein is Bestrophin-2 of Mus musculus (Mouse).